A 368-amino-acid chain; its full sequence is Quinolinate synthase (368 aa).

Iminosuccinate contacts are provided by histidine 46 and serine 63. Cysteine 110 contacts [4Fe-4S] cluster. Residues 141-143 (YVN) and serine 162 contribute to the iminosuccinate site. Cysteine 230 serves as a coordination point for [4Fe-4S] cluster. Iminosuccinate is bound by residues 256-258 (HPE) and threonine 273. Cysteine 320 is a binding site for [4Fe-4S] cluster.

Belongs to the quinolinate synthase family. Type 3 subfamily. [4Fe-4S] cluster is required as a cofactor.

The protein resides in the cytoplasm. It carries out the reaction iminosuccinate + dihydroxyacetone phosphate = quinolinate + phosphate + 2 H2O + H(+). Its pathway is cofactor biosynthesis; NAD(+) biosynthesis; quinolinate from iminoaspartate: step 1/1. In terms of biological role, catalyzes the condensation of iminoaspartate with dihydroxyacetone phosphate to form quinolinate. In Bacillus cereus (strain ATCC 10987 / NRS 248), this protein is Quinolinate synthase.